Here is a 239-residue protein sequence, read N- to C-terminus: tRNA (guanine-N(7)-)-methyltransferase (239 aa).

Residues glutamate 69, glutamate 94, aspartate 121, and aspartate 144 each coordinate S-adenosyl-L-methionine. Aspartate 144 is a catalytic residue. A substrate-binding site is contributed by lysine 148. The tract at residues 150 to 155 (RHNKRR) is interaction with RNA. Residues aspartate 180 and 217-220 (TKFE) contribute to the substrate site.

The protein belongs to the class I-like SAM-binding methyltransferase superfamily. TrmB family. As to quaternary structure, monomer.

It catalyses the reaction guanosine(46) in tRNA + S-adenosyl-L-methionine = N(7)-methylguanosine(46) in tRNA + S-adenosyl-L-homocysteine. The protein operates within tRNA modification; N(7)-methylguanine-tRNA biosynthesis. Catalyzes the formation of N(7)-methylguanine at position 46 (m7G46) in tRNA. In Salmonella paratyphi A (strain ATCC 9150 / SARB42), this protein is tRNA (guanine-N(7)-)-methyltransferase.